The primary structure comprises 56 residues: U-limacoditoxin(3)-Dv21 (56 aa).

Residues methionine 1–serine 19 form the signal peptide. Cystine bridges form between cysteine 26/cysteine 41, cysteine 33/cysteine 46, and cysteine 40/cysteine 53.

Belongs to the limacoditoxin-22 family. In terms of tissue distribution, expressed by the venom secretory cell of the spine. The spine is a cuticular structure containing a single large nucleated venom-secreting cell at its base. It is an independent unit capable of producing, storing and injecting venom. On the back of D.vulnerans caterpillars, spines are grouped together by 50 to 100 to form scoli, of which there are eight in D.vulnerans.

It localises to the secreted. Functionally, probable toxin. Shows a moderate antiparasitic activity against the major pathogenic nematode of ruminants (H.contortus, IC(50)=22.1 uM). Does not show insecticidal activities. Does not induce increase in intracellular calcium in mouse DRG neurons, suggesting that it does not induce pain. This chain is U-limacoditoxin(3)-Dv21, found in Doratifera vulnerans (Mottled cup moth).